The sequence spans 377 residues: Spore coat protein SA (377 aa).

This sequence belongs to the glycosyltransferase group 1 family. Glycosyltransferase 4 subfamily.

This Bacillus subtilis (strain 168) protein is Spore coat protein SA (cotSA).